A 239-amino-acid chain; its full sequence is Uridylate kinase (239 aa).

13 to 16 (KVSG) is an ATP binding site. UMP is bound at residue Gly55. Residues Gly56 and Arg60 each contribute to the ATP site. UMP-binding positions include Asp75 and 136–143 (TGNPFFTT). Residues Thr163, Gln164, Tyr169, and Asp172 each contribute to the ATP site.

Belongs to the UMP kinase family. In terms of assembly, homohexamer.

It localises to the cytoplasm. The catalysed reaction is UMP + ATP = UDP + ADP. It participates in pyrimidine metabolism; CTP biosynthesis via de novo pathway; UDP from UMP (UMPK route): step 1/1. With respect to regulation, inhibited by UTP. Catalyzes the reversible phosphorylation of UMP to UDP. This chain is Uridylate kinase, found in Bartonella henselae (strain ATCC 49882 / DSM 28221 / CCUG 30454 / Houston 1) (Rochalimaea henselae).